A 291-amino-acid polypeptide reads, in one-letter code: GTPase Era (291 aa).

Positions 2–167 constitute an Era-type G domain; the sequence is KSGFVSIIGR…LDEIVKYLDE (166 aa). Residues 10–17 form a G1 region; sequence GRTNAGKS. 10 to 17 is a binding site for GTP; sequence GRTNAGKS. Residues 36–40 form a G2 region; that stretch reads NATRR. Residues 57-60 form a G3 region; sequence DTPG. Residues 57-61 and 116-119 each bind GTP; these read DTPGL and NKVD. A G4 region spans residues 116-119; sequence NKVD. A G5 region spans residues 146–148; sequence YSS. The KH type-2 domain occupies 186–274; sequence YRDFILESIY…LLKLFVTVKK (89 aa).

Belongs to the TRAFAC class TrmE-Era-EngA-EngB-Septin-like GTPase superfamily. Era GTPase family. In terms of assembly, monomer.

The protein localises to the cytoplasm. It is found in the cell inner membrane. Functionally, an essential GTPase that binds both GDP and GTP, with rapid nucleotide exchange. Plays a role in 16S rRNA processing and 30S ribosomal subunit biogenesis and possibly also in cell cycle regulation and energy metabolism. The chain is GTPase Era from Campylobacter jejuni subsp. jejuni serotype O:23/36 (strain 81-176).